Here is a 245-residue protein sequence, read N- to C-terminus: 1-(5-phosphoribosyl)-5-[(5-phosphoribosylamino)methylideneamino] imidazole-4-carboxamide isomerase (245 aa).

The active-site Proton acceptor is the aspartate 7. The active-site Proton donor is the aspartate 129.

The protein belongs to the HisA/HisF family.

It is found in the cytoplasm. The catalysed reaction is 1-(5-phospho-beta-D-ribosyl)-5-[(5-phospho-beta-D-ribosylamino)methylideneamino]imidazole-4-carboxamide = 5-[(5-phospho-1-deoxy-D-ribulos-1-ylimino)methylamino]-1-(5-phospho-beta-D-ribosyl)imidazole-4-carboxamide. The protein operates within amino-acid biosynthesis; L-histidine biosynthesis; L-histidine from 5-phospho-alpha-D-ribose 1-diphosphate: step 4/9. This chain is 1-(5-phosphoribosyl)-5-[(5-phosphoribosylamino)methylideneamino] imidazole-4-carboxamide isomerase, found in Proteus mirabilis (strain HI4320).